Consider the following 290-residue polypeptide: ATP synthase gamma chain (290 aa).

Belongs to the ATPase gamma chain family. In terms of assembly, F-type ATPases have 2 components, CF(1) - the catalytic core - and CF(0) - the membrane proton channel. CF(1) has five subunits: alpha(3), beta(3), gamma(1), delta(1), epsilon(1). CF(0) has three main subunits: a, b and c.

Its subcellular location is the cell membrane. In terms of biological role, produces ATP from ADP in the presence of a proton gradient across the membrane. The gamma chain is believed to be important in regulating ATPase activity and the flow of protons through the CF(0) complex. The protein is ATP synthase gamma chain of Roseiflexus sp. (strain RS-1).